We begin with the raw amino-acid sequence, 499 residues long: 3-beta-hydroxylase (499 aa).

The chain crosses the membrane as a helical; Signal-anchor for type II membrane protein span at residues 2–22; sequence FSSFETLILSFVSLFFMMIFI. Cys441 contributes to the heme binding site.

Belongs to the cytochrome P450 family. The cofactor is heme.

The protein resides in the membrane. The catalysed reaction is (+)-costunolide + reduced [NADPH--hemoprotein reductase] + O2 = 3beta-hydroxycostunolide + oxidized [NADPH--hemoprotein reductase] + H2O + H(+). The enzyme catalyses parthenolide + reduced [NADPH--hemoprotein reductase] + O2 = 3beta-hydroxyparthenolide + oxidized [NADPH--hemoprotein reductase] + H2O + H(+). The protein operates within secondary metabolite biosynthesis; terpenoid biosynthesis. In terms of biological role, involved in the biosynthesis of germacrene-derived sesquiterpene lactones. Component of the parthenolide biosynthetic pathway; parthenolide and conjugates are promising anti-cancer drugs highly active against colon cancer cells. Catalyzes the conversion of costunolide and parthenolide to 3-beta-hydroxycostunolide and 3-beta-hydroxyparthenolide, respectively. This Tanacetum parthenium (Feverfew) protein is 3-beta-hydroxylase.